The sequence spans 467 residues: Gamma-aminobutyric acid receptor subunit gamma-3 (467 aa).

Residues 1 to 17 (MAAKLLLLLCLFSGLHA) form the signal peptide. Residues 18-256 (RSRRVEEDEN…FELSRRMGYF (239 aa)) lie on the Extracellular side of the membrane. Residue Asn110 is glycosylated (N-linked (GlcNAc...) asparagine). A disulfide bridge links Cys171 with Cys185. Asn228 carries an N-linked (GlcNAc...) asparagine glycan. The chain crosses the membrane as a helical span at residues 257 to 277 (TIQTYIPCILTVVLSWVSFWI). The Cytoplasmic segment spans residues 278-283 (KKDATP). A helical membrane pass occupies residues 284 to 303 (ARTTLGITTVLTMTTLSTIA). Residues 304–311 (RKSLPRVS) are Extracellular-facing. A helical membrane pass occupies residues 312-332 (YVTAMDLFVTVCFLFVFAALM). The Cytoplasmic segment spans residues 333 to 446 (EYATLNYYSS…DVSELDSYSR (114 aa)). A helical membrane pass occupies residues 447–467 (VFFPTSFLLFNLVYWVGYLYL).

The protein belongs to the ligand-gated ion channel (TC 1.A.9) family. Gamma-aminobutyric acid receptor (TC 1.A.9.5) subfamily. GABRG3 sub-subfamily. Heteropentamer, formed by a combination of alpha (GABRA1-6), beta (GABRB1-3), gamma (GABRG1-3), delta (GABRD), epsilon (GABRE), rho (GABRR1-3), pi (GABRP) and theta (GABRQ) chains, each subunit exhibiting distinct physiological and pharmacological properties. May be palmitoylated. In terms of tissue distribution, expressed in brain.

Its subcellular location is the postsynaptic cell membrane. The protein resides in the cell membrane. The catalysed reaction is chloride(in) = chloride(out). In terms of biological role, gamma subunit of the heteropentameric ligand-gated chloride channel gated by gamma-aminobutyric acid (GABA), a major inhibitory neurotransmitter in the brain. GABA-gated chloride channels, also named GABA(A) receptors (GABAAR), consist of five subunits arranged around a central pore and contain GABA active binding site(s) located at the alpha and beta subunit interface(s). When activated by GABA, GABAARs selectively allow the flow of chloride across the cell membrane down their electrochemical gradient. The protein is Gamma-aminobutyric acid receptor subunit gamma-3 of Mus musculus (Mouse).